The chain runs to 316 residues: Coproporphyrin III ferrochelatase (316 aa).

Residues tyrosine 13, arginine 30, 46–47, serine 54, and tyrosine 125 each bind Fe-coproporphyrin III; that span reads RY. Residues histidine 183 and glutamate 264 each contribute to the Fe(2+) site.

It belongs to the ferrochelatase family.

Its subcellular location is the cytoplasm. It catalyses the reaction Fe-coproporphyrin III + 2 H(+) = coproporphyrin III + Fe(2+). It functions in the pathway porphyrin-containing compound metabolism; protoheme biosynthesis. Functionally, involved in coproporphyrin-dependent heme b biosynthesis. Catalyzes the insertion of ferrous iron into coproporphyrin III to form Fe-coproporphyrin III. The chain is Coproporphyrin III ferrochelatase from Geobacillus kaustophilus (strain HTA426).